The chain runs to 254 residues: Triosephosphate isomerase (254 aa).

Substrate is bound at residue 9 to 11 (NWK). Catalysis depends on H95, which acts as the Electrophile. E167 (proton acceptor) is an active-site residue. Substrate-binding positions include G173, S213, and 234–235 (GG).

It belongs to the triosephosphate isomerase family. Homodimer.

Its subcellular location is the cytoplasm. It carries out the reaction D-glyceraldehyde 3-phosphate = dihydroxyacetone phosphate. It functions in the pathway carbohydrate biosynthesis; gluconeogenesis. It participates in carbohydrate degradation; glycolysis; D-glyceraldehyde 3-phosphate from glycerone phosphate: step 1/1. Its function is as follows. Involved in the gluconeogenesis. Catalyzes stereospecifically the conversion of dihydroxyacetone phosphate (DHAP) to D-glyceraldehyde-3-phosphate (G3P). In Roseiflexus sp. (strain RS-1), this protein is Triosephosphate isomerase.